Here is a 147-residue protein sequence, read N- to C-terminus: Small ribosomal subunit protein bS16m (147 aa).

Belongs to the bacterial ribosomal protein bS16 family. As to quaternary structure, component of the mitochondrial ribosome small subunit (28S) which comprises a 12S rRNA and about 30 distinct proteins.

The protein resides in the mitochondrion. This is Small ribosomal subunit protein bS16m (mrps-16) from Caenorhabditis elegans.